The following is a 218-amino-acid chain: Peptide methionine sulfoxide reductase MsrA (218 aa).

Cysteine 54 is a catalytic residue.

The protein belongs to the MsrA Met sulfoxide reductase family.

The enzyme catalyses L-methionyl-[protein] + [thioredoxin]-disulfide + H2O = L-methionyl-(S)-S-oxide-[protein] + [thioredoxin]-dithiol. It catalyses the reaction [thioredoxin]-disulfide + L-methionine + H2O = L-methionine (S)-S-oxide + [thioredoxin]-dithiol. Its function is as follows. Has an important function as a repair enzyme for proteins that have been inactivated by oxidation. Catalyzes the reversible oxidation-reduction of methionine sulfoxide in proteins to methionine. This is Peptide methionine sulfoxide reductase MsrA from Azorhizobium caulinodans (strain ATCC 43989 / DSM 5975 / JCM 20966 / LMG 6465 / NBRC 14845 / NCIMB 13405 / ORS 571).